Here is a 162-residue protein sequence, read N- to C-terminus: Phenazine biosynthesis protein PhzB1 (162 aa).

It belongs to the PhzA/PhzB family. Homodimer.

The protein operates within antibiotic biosynthesis; phenazine biosynthesis. In terms of biological role, involved in the biosynthesis of the antibiotic phenazine, a nitrogen-containing heterocyclic molecule. PhzB1 (operon phzA1B1C1E1F1G1) has a role in the biosynthesis of the phenazine during planktonic growth. In Pseudomonas aeruginosa (strain ATCC 15692 / DSM 22644 / CIP 104116 / JCM 14847 / LMG 12228 / 1C / PRS 101 / PAO1), this protein is Phenazine biosynthesis protein PhzB1.